Consider the following 436-residue polypeptide: Trigger factor (436 aa).

In terms of domain architecture, PPIase FKBP-type spans 161–246 (GDQVIVDFDG…VREVKEPTLP (86 aa)).

It belongs to the FKBP-type PPIase family. Tig subfamily.

It is found in the cytoplasm. The enzyme catalyses [protein]-peptidylproline (omega=180) = [protein]-peptidylproline (omega=0). In terms of biological role, involved in protein export. Acts as a chaperone by maintaining the newly synthesized protein in an open conformation. Functions as a peptidyl-prolyl cis-trans isomerase. This Thioalkalivibrio sulfidiphilus (strain HL-EbGR7) protein is Trigger factor.